A 264-amino-acid chain; its full sequence is 3-methyl-2-oxobutanoate hydroxymethyltransferase (264 aa).

Residues Asp-45 and Asp-84 each contribute to the Mg(2+) site. 3-methyl-2-oxobutanoate-binding positions include 45–46 (DS), Asp-84, and Lys-112. Residue Glu-114 participates in Mg(2+) binding. The active-site Proton acceptor is Glu-181.

It belongs to the PanB family. As to quaternary structure, homodecamer; pentamer of dimers. Mg(2+) serves as cofactor.

It localises to the cytoplasm. The catalysed reaction is 3-methyl-2-oxobutanoate + (6R)-5,10-methylene-5,6,7,8-tetrahydrofolate + H2O = 2-dehydropantoate + (6S)-5,6,7,8-tetrahydrofolate. It functions in the pathway cofactor biosynthesis; (R)-pantothenate biosynthesis; (R)-pantoate from 3-methyl-2-oxobutanoate: step 1/2. Functionally, catalyzes the reversible reaction in which hydroxymethyl group from 5,10-methylenetetrahydrofolate is transferred onto alpha-ketoisovalerate to form ketopantoate. In Escherichia coli O8 (strain IAI1), this protein is 3-methyl-2-oxobutanoate hydroxymethyltransferase.